Consider the following 157-residue polypeptide: MTEAANSTPAQPEFQIQRIYVKDVSFEAPNTPVVFQKEWQPEIKLDMDTQTQVLGQDVYEVALTLTVTCKLGEETAFLCEVKQAGIFTAANLDAQNLAHCLGAFCPNILFPYARETVAGLVSRGSFPQLNLAPVNFDALFASHIAQLEAEQAKAGVQ.

This sequence belongs to the SecB family. In terms of assembly, homotetramer, a dimer of dimers. One homotetramer interacts with 1 SecA dimer.

It is found in the cytoplasm. Functionally, one of the proteins required for the normal export of preproteins out of the cell cytoplasm. It is a molecular chaperone that binds to a subset of precursor proteins, maintaining them in a translocation-competent state. It also specifically binds to its receptor SecA. This is Protein-export protein SecB from Tolumonas auensis (strain DSM 9187 / NBRC 110442 / TA 4).